A 150-amino-acid chain; its full sequence is Globin (150 aa).

The 140-residue stretch at 11-150 (PLSAAEKTKI…MICILLRSAY (140 aa)) folds into the Globin domain. Heme b contacts are provided by His-74 and His-106.

This sequence belongs to the globin family. As to quaternary structure, monomer.

In Lampetra fluviatilis (European river lamprey), this protein is Globin.